A 467-amino-acid polypeptide reads, in one-letter code: tRNA-2-methylthio-N(6)-dimethylallyladenosine synthase (467 aa).

Residues 1–20 (MSDDTTQIEPAMAQETSPRA) form a disordered region. Residues 23 to 143 (RKVFVKTYGC…LPNALARVRG (121 aa)) form the MTTase N-terminal domain. [4Fe-4S] cluster contacts are provided by C32, C68, C106, C184, C188, and C191. Residues 170 to 402 (RKRGVSAFLT…QALLSAQQYA (233 aa)) form the Radical SAM core domain. The TRAM domain maps to 405 to 467 (DSMIGRKMDV…TNSLIAQKLA (63 aa)).

The protein belongs to the methylthiotransferase family. MiaB subfamily. As to quaternary structure, monomer. The cofactor is [4Fe-4S] cluster.

The protein localises to the cytoplasm. It carries out the reaction N(6)-dimethylallyladenosine(37) in tRNA + (sulfur carrier)-SH + AH2 + 2 S-adenosyl-L-methionine = 2-methylsulfanyl-N(6)-dimethylallyladenosine(37) in tRNA + (sulfur carrier)-H + 5'-deoxyadenosine + L-methionine + A + S-adenosyl-L-homocysteine + 2 H(+). In terms of biological role, catalyzes the methylthiolation of N6-(dimethylallyl)adenosine (i(6)A), leading to the formation of 2-methylthio-N6-(dimethylallyl)adenosine (ms(2)i(6)A) at position 37 in tRNAs that read codons beginning with uridine. In Brucella canis (strain ATCC 23365 / NCTC 10854 / RM-666), this protein is tRNA-2-methylthio-N(6)-dimethylallyladenosine synthase.